We begin with the raw amino-acid sequence, 848 residues long: Adenylate cyclase (848 aa).

A catalytic region spans residues 1 to 535 (MYLYIETLKQ…DISHHFPLRL (535 aa)). The regulatory stretch occupies residues 541–848 (KALYSPCEIR…SQPAQQFQLH (308 aa)).

This sequence belongs to the adenylyl cyclase class-1 family.

It localises to the cytoplasm. The catalysed reaction is ATP = 3',5'-cyclic AMP + diphosphate. The regulatory domain is involved in the regulation of cyclase activity by the carbon source. The chain is Adenylate cyclase (cya) from Yersinia intermedia.